The primary structure comprises 141 residues: ATP synthase epsilon chain (141 aa).

The protein belongs to the ATPase epsilon chain family. F-type ATPases have 2 components, CF(1) - the catalytic core - and CF(0) - the membrane proton channel. CF(1) has five subunits: alpha(3), beta(3), gamma(1), delta(1), epsilon(1). CF(0) has three main subunits: a, b and c.

Its subcellular location is the cell membrane. Functionally, produces ATP from ADP in the presence of a proton gradient across the membrane. The protein is ATP synthase epsilon chain of Lactococcus lactis subsp. lactis (strain IL1403) (Streptococcus lactis).